Consider the following 209-residue polypeptide: Na(+)-translocating NADH-quinone reductase subunit D (209 aa).

5 helical membrane passes run Leu42–Ile62, Ile66–Val86, Val103–Met123, Phe131–Leu151, and Asn178–Leu198.

The protein belongs to the NqrDE/RnfAE family. As to quaternary structure, composed of six subunits; NqrA, NqrB, NqrC, NqrD, NqrE and NqrF.

It localises to the cell inner membrane. It carries out the reaction a ubiquinone + n Na(+)(in) + NADH + H(+) = a ubiquinol + n Na(+)(out) + NAD(+). NQR complex catalyzes the reduction of ubiquinone-1 to ubiquinol by two successive reactions, coupled with the transport of Na(+) ions from the cytoplasm to the periplasm. NqrA to NqrE are probably involved in the second step, the conversion of ubisemiquinone to ubiquinol. This Proteus mirabilis (strain HI4320) protein is Na(+)-translocating NADH-quinone reductase subunit D.